We begin with the raw amino-acid sequence, 211 residues long: Endonuclease V (211 aa).

Mg(2+)-binding residues include Asp-31 and Glu-95. The segment at 182–211 (IYEVKNTPSPNRSRKKRGNRGKDNNNSQGN) is disordered.

This sequence belongs to the endonuclease V family. It depends on Mg(2+) as a cofactor.

The protein resides in the cytoplasm. The catalysed reaction is Endonucleolytic cleavage at apurinic or apyrimidinic sites to products with a 5'-phosphate.. Functionally, DNA repair enzyme involved in the repair of deaminated bases. Selectively cleaves double-stranded DNA at the second phosphodiester bond 3' to a deoxyinosine leaving behind the intact lesion on the nicked DNA. The protein is Endonuclease V of Pyrococcus horikoshii (strain ATCC 700860 / DSM 12428 / JCM 9974 / NBRC 100139 / OT-3).